The primary structure comprises 367 residues: MTSTQRTLMVMAGGTGGHVFPGLAVAHRMQAQGWRVVWLGSPAGMEATLVPRHGIPMEYVRFGGLRGKGLATKFALPFNLLRACAQSLRALRRVKPDVVLGMGGYITFPAGLVTVLTGRPLVLHEQNSIAGLTNKVLAKLAKRVLVAFPGALPNAEWTGNPIRTELARTEPPQARYAARSGKLRLLVVGGSLGAAALNEVVPRALALLAPDERPQVVHQAGAKHIDTLKENYEAAGLSCGSDVALVPFIDDMASAYANADLVICRSGAMTVAEIAAVGVAALFVPFPHAVDDHQTTNAEFLAEQGAAVLVQQRDLSAELLADWLRGQSRDSLAAMAERSRSLAKPDATDEVARVCAAVAGANLEGKQ.

UDP-N-acetyl-alpha-D-glucosamine contacts are provided by residues 15-17 (TGG), asparagine 127, arginine 163, serine 191, isoleucine 249, and glutamine 294.

This sequence belongs to the glycosyltransferase 28 family. MurG subfamily.

It is found in the cell inner membrane. It catalyses the reaction di-trans,octa-cis-undecaprenyl diphospho-N-acetyl-alpha-D-muramoyl-L-alanyl-D-glutamyl-meso-2,6-diaminopimeloyl-D-alanyl-D-alanine + UDP-N-acetyl-alpha-D-glucosamine = di-trans,octa-cis-undecaprenyl diphospho-[N-acetyl-alpha-D-glucosaminyl-(1-&gt;4)]-N-acetyl-alpha-D-muramoyl-L-alanyl-D-glutamyl-meso-2,6-diaminopimeloyl-D-alanyl-D-alanine + UDP + H(+). It participates in cell wall biogenesis; peptidoglycan biosynthesis. Functionally, cell wall formation. Catalyzes the transfer of a GlcNAc subunit on undecaprenyl-pyrophosphoryl-MurNAc-pentapeptide (lipid intermediate I) to form undecaprenyl-pyrophosphoryl-MurNAc-(pentapeptide)GlcNAc (lipid intermediate II). This Burkholderia pseudomallei (strain 1106a) protein is UDP-N-acetylglucosamine--N-acetylmuramyl-(pentapeptide) pyrophosphoryl-undecaprenol N-acetylglucosamine transferase.